The sequence spans 324 residues: Beta-ketoacyl-[acyl-carrier-protein] synthase III (324 aa).

Residues C112 and H249 contribute to the active site. Positions 250-254 (QANIR) are ACP-binding. N279 is an active-site residue.

This sequence belongs to the thiolase-like superfamily. FabH family. Homodimer.

It localises to the cytoplasm. It catalyses the reaction malonyl-[ACP] + acetyl-CoA + H(+) = 3-oxobutanoyl-[ACP] + CO2 + CoA. The protein operates within lipid metabolism; fatty acid biosynthesis. Functionally, catalyzes the condensation reaction of fatty acid synthesis by the addition to an acyl acceptor of two carbons from malonyl-ACP. Catalyzes the first condensation reaction which initiates fatty acid synthesis and may therefore play a role in governing the total rate of fatty acid production. Possesses both acetoacetyl-ACP synthase and acetyl transacylase activities. Its substrate specificity determines the biosynthesis of branched-chain and/or straight-chain of fatty acids. In Streptococcus sanguinis (strain SK36), this protein is Beta-ketoacyl-[acyl-carrier-protein] synthase III.